Consider the following 71-residue polypeptide: uncharacterized protein (71 aa).

One can recognise an HTH cro/C1-type domain in the interval 5 to 59 (IKEFRAKFNMTQEELAKRVGVRRETIVFLEKGKYNPSLKLAYKIARVFNAKIEDI). The H-T-H motif DNA-binding region spans 16 to 35 (QEELAKRVGVRRETIVFLEK).

This is an uncharacterized protein from Archaeoglobus fulgidus (strain ATCC 49558 / DSM 4304 / JCM 9628 / NBRC 100126 / VC-16).